A 235-amino-acid polypeptide reads, in one-letter code: Ribonuclease 3 (235 aa).

The RNase III domain maps to 6-135 (LISLEKILGF…VIGAVYFDCG (130 aa)). E48 is a Mg(2+) binding site. The active site involves D52. The Mg(2+) site is built by N121 and E124. E124 is an active-site residue. Positions 162 to 231 (DEKTTLQELL…AKKALELLKN (70 aa)) constitute a DRBM domain.

The protein belongs to the ribonuclease III family. Homodimer. Mg(2+) is required as a cofactor.

It localises to the cytoplasm. The catalysed reaction is Endonucleolytic cleavage to 5'-phosphomonoester.. Functionally, digests double-stranded RNA. Involved in the processing of primary rRNA transcript to yield the immediate precursors to the large and small rRNAs (23S and 16S). Processes some mRNAs, and tRNAs when they are encoded in the rRNA operon. Processes pre-crRNA and tracrRNA of type II CRISPR loci if present in the organism. The polypeptide is Ribonuclease 3 (Carboxydothermus hydrogenoformans (strain ATCC BAA-161 / DSM 6008 / Z-2901)).